The primary structure comprises 96 residues: RNA-binding protein Hfq (96 aa).

The region spanning 9 to 68 is the Sm domain; the sequence is DPYLNALRRERIPVSIYLVNGIKLQGQIESFDQFVILLKNTVNQMVYKHAISTVVPARSV. The interval 67–96 is disordered; the sequence is SVSHHNNSNNSNQQNYQQEQQTDSNVEKAE. Residues 72–87 are compositionally biased toward low complexity; it reads NNSNNSNQQNYQQEQQ.

This sequence belongs to the Hfq family. In terms of assembly, homohexamer.

Functionally, RNA chaperone that binds small regulatory RNA (sRNAs) and mRNAs to facilitate mRNA translational regulation in response to envelope stress, environmental stress and changes in metabolite concentrations. Also binds with high specificity to tRNAs. This is RNA-binding protein Hfq from Pasteurella multocida (strain Pm70).